Here is a 1274-residue protein sequence, read N- to C-terminus: Clustered mitochondria protein homolog (1274 aa).

Residues 1–53 (MAQTNGELEHSKGMSSPAVRISQAQKSTKLTVDPESPEQVANGTHAEGEQPEE) form a disordered region. TPR repeat units follow at residues 293–326 (SPSFNSSFEALQEANNQKDLLTTFPFQNAIPNNP), 510–543 (DYGGVEGKDVVATHPDFVPVFEKLSKALRIKKHP), and 628–661 (AKEAAKKEQSETAEPKEEGAEEKSEEALDQERVD). The 245-residue stretch at 342–586 (DITRSQENYL…RVTPLDVMWQ (245 aa)) folds into the Clu domain. Disordered stretches follow at residues 631–655 (AAKKEQSETAEPKEEGAEEKSEEAL) and 893–925 (VSNGVNGAGHDDSNSNKKKKKKGGDSNSPARAA). 4 TPR repeats span residues 998-1031 (AKLYHQLSMLYYQTDEKEAAVELARKAVIVTERT), 1040-1073 (ILSYLNLSLFEHASGNTKTALVYIKHAMDLWKII), 1082-1115 (ITTMNNAAVMLQHLKQYSDSRKWFEASLVVCESL), and 1124-1157 (ATILFQLAQALALDQDSKGAVGKMRDAYNIFLQQ). The interval 1197-1274 (INMTPRTLGT…KLRGSKKSSA (78 aa)) is disordered. The segment covering 1200–1217 (TPRTLGTRVQPQVGQTAP) has biased composition (polar residues).

It belongs to the CLU family. As to quaternary structure, may associate with the eukaryotic translation initiation factor 3 (eIF-3) complex.

It is found in the cytoplasm. Its function is as follows. mRNA-binding protein involved in proper cytoplasmic distribution of mitochondria. This Aspergillus terreus (strain NIH 2624 / FGSC A1156) protein is Clustered mitochondria protein homolog.